Consider the following 701-residue polypeptide: Polyribonucleotide nucleotidyltransferase (701 aa).

Mg(2+) is bound by residues Asp485 and Asp491. Residues 552-611 enclose the KH domain; that stretch reads PKIFKTTVDPEKIRDIIGPGGKMINKIIAETNVKIDIEPDGRIFVAAPDDISGNRAISMI. An S1 motif domain is found at 621-689; it reads GQFFLGKVTR…KLGRLSLSRK (69 aa).

It belongs to the polyribonucleotide nucleotidyltransferase family. Requires Mg(2+) as cofactor.

The protein localises to the cytoplasm. The catalysed reaction is RNA(n+1) + phosphate = RNA(n) + a ribonucleoside 5'-diphosphate. Its function is as follows. Involved in mRNA degradation. Catalyzes the phosphorolysis of single-stranded polyribonucleotides processively in the 3'- to 5'-direction. This chain is Polyribonucleotide nucleotidyltransferase, found in Caldicellulosiruptor bescii (strain ATCC BAA-1888 / DSM 6725 / KCTC 15123 / Z-1320) (Anaerocellum thermophilum).